A 270-amino-acid polypeptide reads, in one-letter code: F420 non-reducing hydrogenase II cytochrome subunit (270 aa).

The next 5 helical transmembrane spans lie at A27–M47, M57–S77, I139–Y159, W173–L193, and V195–L215.

The protein belongs to the HupC/HyaC/HydC family. As to quaternary structure, composed of a large subunit (VhtA), a small subunit (VhtG) and a cytochrome subunit (VhtC). Heme b serves as cofactor.

The protein localises to the cell membrane. The enzyme catalyses methanophenazine + H2 = dihydromethanophenazine. Its function is as follows. Part of the F420 non-reducing hydrogenase II complex that catalyzes the reduction of methanophenazine to dihydromethanophenazine. The chain is F420 non-reducing hydrogenase II cytochrome subunit from Methanosarcina mazei (strain ATCC BAA-159 / DSM 3647 / Goe1 / Go1 / JCM 11833 / OCM 88) (Methanosarcina frisia).